The chain runs to 258 residues: Ubiquinone/menaquinone biosynthesis C-methyltransferase UbiE (258 aa).

S-adenosyl-L-methionine contacts are provided by residues Thr-81, Asp-102, and 130 to 131 (NA).

The protein belongs to the class I-like SAM-binding methyltransferase superfamily. MenG/UbiE family.

It carries out the reaction a 2-demethylmenaquinol + S-adenosyl-L-methionine = a menaquinol + S-adenosyl-L-homocysteine + H(+). The enzyme catalyses a 2-methoxy-6-(all-trans-polyprenyl)benzene-1,4-diol + S-adenosyl-L-methionine = a 5-methoxy-2-methyl-3-(all-trans-polyprenyl)benzene-1,4-diol + S-adenosyl-L-homocysteine + H(+). The protein operates within quinol/quinone metabolism; menaquinone biosynthesis; menaquinol from 1,4-dihydroxy-2-naphthoate: step 2/2. Its pathway is cofactor biosynthesis; ubiquinone biosynthesis. Methyltransferase required for the conversion of demethylmenaquinol (DMKH2) to menaquinol (MKH2) and the conversion of 2-polyprenyl-6-methoxy-1,4-benzoquinol (DDMQH2) to 2-polyprenyl-3-methyl-6-methoxy-1,4-benzoquinol (DMQH2). The protein is Ubiquinone/menaquinone biosynthesis C-methyltransferase UbiE of Sinorhizobium fredii (strain NBRC 101917 / NGR234).